Here is a 1480-residue protein sequence, read N- to C-terminus: Cystic fibrosis transmembrane conductance regulator (1480 aa).

Topologically, residues 1–77 (MQRSPLEKAS…KLINALRRCF (77 aa)) are cytoplasmic. The helical transmembrane segment at 78–98 (FWRFMFYGIFLYLGEVTKAVQ) threads the bilayer. The 285-residue stretch at 81–365 (FMFYGIFLYL…WAVQTWYDSL (285 aa)) folds into the ABC transmembrane type-1 1 domain. Residues 99–122 (PLLLGRIIASYDPDNKEERSIAIY) lie on the Extracellular side of the membrane. Residues 123–146 (LGIGLCLLFIVRTLLLHPAIFGLH) traverse the membrane as a helical segment. Residues 147-195 (HIGMQMRIAMFSLIYKKTLKLSSRVLDKISIGQLVSLLSNNLNKFDEGL) lie on the Cytoplasmic side of the membrane. A helical transmembrane segment spans residues 196 to 216 (ALAHFVWIAPLQVALLMGLIW). Residues 217-222 (ELLQAS) are Extracellular-facing. Residues 223 to 243 (AFCGLGFLIVLALFQAGLGRM) traverse the membrane as a helical segment. Residues 244-298 (MMKYRDQRAGKISERLVITSEMIENIQSVKAYCWEEAMEKMIENLRQTELKLTRK) are Cytoplasmic-facing. A helical transmembrane segment spans residues 299–319 (AAYVRYFNSSAFFFSGFFVVF). The Extracellular segment spans residues 320-339 (LSVLPYALIKGIVLRKIFTT). A helical transmembrane segment spans residues 340-358 (ISFCIVLRMAVTRQFPWAV). Over 359-858 (QTWYDSLGAI…YLRYITVHKS (500 aa)) the chain is Cytoplasmic. ATP contacts are provided by residues Trp401, Ser434, 458–465 (GSTGAGKT), and Gln493. Residues 423 to 646 (NGDDSLFFSN…RPDFSSKLMG (224 aa)) enclose the ABC transporter 1 domain. Cys524 is lipidated: S-palmitoyl cysteine. Phosphoserine is present on residues Ser549 and Ser660. Residues 654 to 831 (SAERRNSILT…EEINEEDLKE (178 aa)) form a disordered R region region. Ser670 bears the Phosphoserine; by PKA mark. Ser686 carries the phosphoserine modification. Lys688 participates in a covalent cross-link: Glycyl lysine isopeptide (Lys-Gly) (interchain with G-Cter in ubiquitin). 2 positions are modified to phosphoserine: Ser700 and Ser712. Thr717 is modified (phosphothreonine). Phosphoserine occurs at positions 737, 753, 768, 790, 795, and 813. The chain crosses the membrane as a helical span at residues 859–879 (LIFVLIWCLVIFLAEVAASLV). One can recognise an ABC transmembrane type-1 2 domain in the interval 859-1155 (LIFVLIWCLV…AVNSSIDVDS (297 aa)). Over 880-918 (VLWLLGNTPLQDKGNSTHSRNNSYAVIITSTSSYYVFYI) the chain is Extracellular. 2 N-linked (GlcNAc...) asparagine glycosylation sites follow: Asn894 and Asn900. A discontinuously helical membrane pass occupies residues 919 to 939 (YVGVADTLLAMGFFRGLPLVH). Over 940–990 (TLITVSKILHHKMLHSVLQAPMSTLNTLKAGGILNRFSKDIAILDDLLPLT) the chain is Cytoplasmic. A helical transmembrane segment spans residues 991–1011 (IFDFIQLLLIVIGAIAVVAVL). Residues 1012–1013 (QP) lie on the Extracellular side of the membrane. The chain crosses the membrane as a helical span at residues 1014–1034 (YIFVATVPVIVAFIMLRAYFL). Residues 1035–1095 (QTSQQLKQLE…TANWFLYLST (61 aa)) lie on the Cytoplasmic side of the membrane. Residues 1096 to 1116 (LRWFQMRIEMIFVMFFIAVTF) form a helical membrane-spanning segment. The Extracellular segment spans residues 1117–1130 (ISILTTGEGEGRIG). A helical transmembrane segment spans residues 1131–1151 (IILTLAMNIMSTLQWAVNSSI). Residues 1152–1480 (DVDSLMRSVS…TEEEVQDTRL (329 aa)) are Cytoplasmic-facing. The 234-residue stretch at 1210–1443 (MTVKDLSAKY…RSLFRQAISP (234 aa)) folds into the ABC transporter 2 domain. ATP contacts are provided by residues Tyr1219 and 1244 to 1251 (GRTGSGKS). Residues 1386 to 1480 (RTLKQAFADC…TEEEVQDTRL (95 aa)) form an interaction with GORASP2 region. Residue Cys1395 is the site of S-palmitoyl cysteine attachment. Phosphoserine occurs at positions 1444 and 1456. The interval 1451–1480 (PHRNSSKGKSQPQIAALKEETEEEVQDTRL) is disordered. Over residues 1470 to 1480 (ETEEEVQDTRL) the composition is skewed to acidic residues. The PDZ-binding motif lies at 1478 to 1480 (TRL).

The protein belongs to the ABC transporter superfamily. ABCC family. CFTR transporter (TC 3.A.1.202) subfamily. In terms of assembly, monomer; does not require oligomerization for channel activity. May form oligomers in the membrane. Interacts with SLC26A3, SLC26A6 and NHERF1. Interacts with SHANK2. Interacts with MYO6. Interacts (via C-terminus) with GOPC (via PDZ domain); this promotes CFTR internalization and thereby decreases channel activity. Interacts with SLC4A7 through NHERF1. Found in a complex with MYO5B and RAB11A. Interacts with ANO1. Interacts with SLC26A8. Interacts with AHCYL1; the interaction increases CFTR activity. Interacts with CSE1L. The core-glycosylated form interacts with GORASP2 (via PDZ GRASP-type 1 domain) in respone to ER stress. Interacts with MARCHF2; the interaction leads to CFTR ubiqtuitination and degradation. Interacts with ADGRG2. In terms of processing, N-glycosylated. Phosphorylated; cAMP treatment promotes phosphorylation and activates the channel. Dephosphorylation decreases the ATPase activity (in vitro). Phosphorylation at PKA sites activates the channel. Phosphorylation at PKC sites enhances the response to phosphorylation by PKA. Phosphorylated by AMPK; this inhibits channel activity. Post-translationally, ubiquitinated, leading to its degradation in the lysosome. Deubiquitination by USP10 in early endosomes enhances its endocytic recycling to the cell membrane. Ubiquitinated by RNF185 during ER stress. Ubiquitinated by MARCHF2.

It localises to the apical cell membrane. It is found in the early endosome membrane. Its subcellular location is the cell membrane. The protein localises to the recycling endosome membrane. The protein resides in the endoplasmic reticulum membrane. It localises to the nucleus. The catalysed reaction is ATP + H2O + closed Cl(-) channel = ADP + phosphate + open Cl(-) channel.. It catalyses the reaction chloride(in) = chloride(out). It carries out the reaction hydrogencarbonate(in) = hydrogencarbonate(out). The enzyme catalyses ATP + H2O = ADP + phosphate + H(+). Functionally, epithelial ion channel that plays an important role in the regulation of epithelial ion and water transport and fluid homeostasis. Mediates the transport of chloride ions across the cell membrane. Possesses an intrinsic ATPase activity and utilizes ATP to gate its channel; the passive flow of anions through the channel is gated by cycles of ATP binding and hydrolysis by the ATP-binding domains. The ion channel is also permeable to HCO(3)(-); selectivity depends on the extracellular chloride concentration. Exerts its function also by modulating the activity of other ion channels and transporters. Contributes to the regulation of the pH and the ion content of the epithelial fluid layer. Modulates the activity of the epithelial sodium channel (ENaC) complex, in part by regulating the cell surface expression of the ENaC complex. May regulate bicarbonate secretion and salvage in epithelial cells by regulating the transporter SLC4A7. Can inhibit the chloride channel activity of ANO1. Plays a role in the chloride and bicarbonate homeostasis during sperm epididymal maturation and capacitation. The chain is Cystic fibrosis transmembrane conductance regulator from Nomascus leucogenys (Northern white-cheeked gibbon).